The chain runs to 358 residues: DNA polymerase IV (358 aa).

Residues 6–187 (IIHIDMDYFF…LDIGDFPGVG (182 aa)) enclose the UmuC domain. Residues Asp-10 and Asp-105 each contribute to the Mg(2+) site. The active site involves Glu-106.

The protein belongs to the DNA polymerase type-Y family. As to quaternary structure, monomer. Mg(2+) is required as a cofactor.

The protein resides in the cytoplasm. It catalyses the reaction DNA(n) + a 2'-deoxyribonucleoside 5'-triphosphate = DNA(n+1) + diphosphate. Its function is as follows. Poorly processive, error-prone DNA polymerase involved in untargeted mutagenesis. Copies undamaged DNA at stalled replication forks, which arise in vivo from mismatched or misaligned primer ends. These misaligned primers can be extended by PolIV. Exhibits no 3'-5' exonuclease (proofreading) activity. May be involved in translesional synthesis, in conjunction with the beta clamp from PolIII. The sequence is that of DNA polymerase IV from Staphylococcus haemolyticus (strain JCSC1435).